The chain runs to 135 residues: Small ribosomal subunit protein bS18 (135 aa).

Residues 1–65 (MARPDMGGPK…GDEGGGRRGF (65 aa)) form a disordered region. Gly residues predominate over residues 9–41 (PKTGGFGGPRSGGFGGGGGGGGGFGGGGFGGGR). Basic and acidic residues predominate over residues 42–61 (GGDRGDRGDRDDRGGDEGGG).

This sequence belongs to the bacterial ribosomal protein bS18 family. In terms of assembly, part of the 30S ribosomal subunit. Forms a tight heterodimer with protein bS6.

In terms of biological role, binds as a heterodimer with protein bS6 to the central domain of the 16S rRNA, where it helps stabilize the platform of the 30S subunit. The chain is Small ribosomal subunit protein bS18 from Anaeromyxobacter sp. (strain K).